The chain runs to 344 residues: MGWWSLGSSGSKADPEKSKANDSKSSNRRQQEEGEQSFIPPPLTSRTSSSSSSKSTTDWNSSLNAFDWSQFKQPRNLIPTALLTGGILFVVYVQRRYLRRFPEATDISSSYFRSRSLLGRVTSVGDGDNFRIFHTPGGRLVGWGWLPWMKVPTARKELKDKTVHIRLAGVDAPELAHFGRPAQPYAYEAHMWLTSYLMNRRVRAYVHRPDQYKRVIATVYVRRWLDFPPLRRRDVSYEMLRRGLATVYEAKSGVEFGGTENERKYREAEMLAKNRRQGLWKDFGKRGGVNFESPREYKTRMQSLDMSAESSSSSSSSSNTEKNPGLVGSLLRKVWPFGSKKDGT.

The span at 1–11 (MGWWSLGSSGS) shows a compositional bias: polar residues. The segment at 1–55 (MGWWSLGSSGSKADPEKSKANDSKSSNRRQQEEGEQSFIPPPLTSRTSSSSSSKS) is disordered. A compositionally biased stretch (basic and acidic residues) spans 13 to 22 (ADPEKSKAND). Residues 44 to 55 (TSRTSSSSSSKS) are compositionally biased toward low complexity. Residues 77 to 93 (LIPTALLTGGILFVVYV) form a helical membrane-spanning segment. The region spanning 115–282 (RSLLGRVTSV…KNRRQGLWKD (168 aa)) is the TNase-like domain. The active site involves Arg166. Residue Asp171 participates in Ca(2+) binding. Active-site residues include Glu174 and Arg214. Positions 291-327 (FESPREYKTRMQSLDMSAESSSSSSSSSNTEKNPGLV) are disordered. Positions 300 to 309 (RMQSLDMSAE) are enriched in polar residues.

It belongs to the LCL3 family.

The protein localises to the mitochondrion. It is found in the membrane. This is Probable endonuclease lcl3 (lcl3) from Talaromyces marneffei (strain ATCC 18224 / CBS 334.59 / QM 7333) (Penicillium marneffei).